The chain runs to 235 residues: Ribosomal RNA-processing protein 17 (235 aa).

Residues 49–110 (QRQKKAQEFI…AKNDKTEDLQ (62 aa)) adopt a coiled-coil conformation. The span at 99 to 108 (EDAKNDKTED) shows a compositional bias: basic and acidic residues. Disordered regions lie at residues 99 to 138 (EDAK…SVKP) and 209 to 235 (RVKK…KRRR). S113, S116, and S122 each carry phosphoserine. Basic and acidic residues predominate over residues 217 to 235 (TKNERRINQRKANDNKRRR).

The protein belongs to the RRP17 family.

It localises to the nucleus. It is found in the nucleolus. Its function is as follows. Essential protein involved in ribosomal RNA processing. In Saccharomyces cerevisiae (strain ATCC 204508 / S288c) (Baker's yeast), this protein is Ribosomal RNA-processing protein 17 (RRP17).